The sequence spans 502 residues: Zinc finger C3HC-type protein 1 (502 aa).

A2 carries the post-translational modification N-acetylalanine. S24 is modified (phosphoserine). T28 carries the post-translational modification Phosphothreonine. The segment at 35–74 (LIDEGIAPEEGGVDAQDTSATSQSVNGSPQAEQPSLESTS) is disordered. Residues 50–72 (QDTSATSQSVNGSPQAEQPSLES) are compositionally biased toward polar residues. A phosphoserine mark is found at S58 and S62. T84 carries the post-translational modification Phosphothreonine. Residues 102–156 (CAKYGWVTVECDMLKCSSCQAFLCASLQPAFDFDRYKQRCAELKKALCTAHEKFC) form a C3HC-type zinc finger. The disordered stretch occupies residues 302-423 (SSPIPGLEGR…SSRSFFDPTS (122 aa)). A phosphoserine mark is found at S321 and S329. The residue at position 333 (T333) is a Phosphothreonine. A phosphoserine mark is found at S338, S344, S354, S359, and S370. Over residues 351–360 (RTRSWDSSSP) the composition is skewed to polar residues. Positions 371–380 (PTTRTRPVTR) are enriched in low complexity. A Phosphoserine modification is found at S381. T384 is modified (phosphothreonine). S395 is modified (phosphoserine). Positions 396–402 (PLRKAKR) match the Nuclear localization signal motif. S407 and S483 each carry phosphoserine. Residues 407–422 (SSSSSDTSSRSFFDPT) show a composition bias toward low complexity.

In terms of assembly, interacts with TPR; this interaction mediates ZC3HC1 nuclear envelopes (NE)-association but also required for proper positioning of a substantial amount of TPR at the nuclear basket (NB). Phosphorylated. May also be weakly phosphorylated on Tyr residues.

It is found in the nucleus. The protein resides in the nucleus envelope. Functionally, required for proper positioning of a substantial amount of TPR at the nuclear basket (NB) through interaction with TPR. This chain is Zinc finger C3HC-type protein 1 (ZC3HC1), found in Pongo abelii (Sumatran orangutan).